Consider the following 447-residue polypeptide: N-succinylarginine dihydrolase (447 aa).

Substrate is bound by residues 19–28 (AGLSFGNEAS), Asn-110, and 137–138 (HR). Glu-174 is a catalytic residue. A substrate-binding site is contributed by Arg-212. His-248 is an active-site residue. Substrate-binding residues include Asp-250 and Asn-359. Cys-365 (nucleophile) is an active-site residue.

It belongs to the succinylarginine dihydrolase family. As to quaternary structure, homodimer.

The enzyme catalyses N(2)-succinyl-L-arginine + 2 H2O + 2 H(+) = N(2)-succinyl-L-ornithine + 2 NH4(+) + CO2. Its pathway is amino-acid degradation; L-arginine degradation via AST pathway; L-glutamate and succinate from L-arginine: step 2/5. Catalyzes the hydrolysis of N(2)-succinylarginine into N(2)-succinylornithine, ammonia and CO(2). The polypeptide is N-succinylarginine dihydrolase (Salmonella typhi).